The chain runs to 323 residues: Glyoxylate/hydroxypyruvate reductase B (323 aa).

The segment at 37-62 (AEHGGAGARRRHDRLQQHGGSSAAGE) is disordered. Residues Arg236 and Glu265 contribute to the active site. The active-site Proton donor is the His284.

This sequence belongs to the D-isomer specific 2-hydroxyacid dehydrogenase family. GhrB subfamily. As to quaternary structure, homodimer.

The protein localises to the cytoplasm. The enzyme catalyses glycolate + NADP(+) = glyoxylate + NADPH + H(+). It carries out the reaction (R)-glycerate + NAD(+) = 3-hydroxypyruvate + NADH + H(+). The catalysed reaction is (R)-glycerate + NADP(+) = 3-hydroxypyruvate + NADPH + H(+). Its function is as follows. Catalyzes the NADPH-dependent reduction of glyoxylate and hydroxypyruvate into glycolate and glycerate, respectively. This is Glyoxylate/hydroxypyruvate reductase B (tkrA) from Enterobacter agglomerans (Erwinia herbicola).